The primary structure comprises 1238 residues: Chitin synthase 4 (1238 aa).

Disordered stretches follow at residues 1 to 93 and 132 to 190; these read MAEP…PERN and TVSS…RRQK. Over residues 14-34 the composition is skewed to basic and acidic residues; that stretch reads TRDKSHSPYRESPSRRLRDVE. A glycan (N-linked (GlcNAc...) asparagine) is linked at N50. Composition is skewed to polar residues over residues 71–80 and 133–142; these read SNPNPMSQSD and VSSGSTQQDT. Basic and acidic residues predominate over residues 175 to 190; the sequence is RKDTRNLTEEEKRRQK. N-linked (GlcNAc...) asparagine glycosylation is present at N180. 2 helical membrane passes run 200–220 and 235–255; these read IWNI…LQCF and VGLI…TFGF. N365, N404, and N426 each carry an N-linked (GlcNAc...) asparagine glycan. A helical membrane pass occupies residues 487–507; sequence VVLYVSLVFILAIVAAKFFLA. 2 disordered regions span residues 548 to 570 and 582 to 606; these read PKIT…RGSM and YAVD…AKLL. Positions 553 to 562 are enriched in polar residues; sequence PASTVTGSDG. 3 N-linked (GlcNAc...) asparagine glycosylation sites follow: N617, N903, and N1030. Transmembrane regions (helical) follow at residues 1062–1082, 1087–1107, and 1115–1135; these read IGTL…ILSI, VPVI…ILIV, and YILW…VLPA.

This sequence belongs to the chitin synthase family. Class IV subfamily. In terms of processing, maximal activity requires trypsin activation, suggesting a zymogenic nature.

It is found in the cell membrane. It catalyses the reaction [(1-&gt;4)-N-acetyl-beta-D-glucosaminyl](n) + UDP-N-acetyl-alpha-D-glucosamine = [(1-&gt;4)-N-acetyl-beta-D-glucosaminyl](n+1) + UDP + H(+). With respect to regulation, activity is stimulated by Mg(2+), and is more inhibited by polyoxin D than by nikkomycin. Its function is as follows. Polymerizes chitin, a structural polymer of the cell wall and septum, by transferring the sugar moiety of UDP-GlcNAc to the non-reducing end of the growing chitin polymer. CHS4 synthesizes a large amount of chitin and appears to play a role in the process of cell separation. CHS4 is particularly well suited for functioning at the higher temperatures associated with its poorly characterized saprophic environment and with human infection. The chain is Chitin synthase 4 from Exophiala dermatitidis (Black yeast-like fungus).